The following is a 482-amino-acid chain: MKFIVKPHPEIFVKSESVRKRFTKILECNIRNIVKSRTESVAVFNRRDHIEVTSESNEYHAEVLEILTHTPGIHHVLEVKQSEFKDLHDIYEQVLELSRPLIENKTFVVRAKRRGKHDFTSIELERYVGGGLNQAVESARVKLHNPDVTVKVEVSGDKLNQVLARHKGLGGFPLGTQEDVLSLISGGFDSGVSSYLHIKRGSKVHYCFFNLGGPAHEIGVKQVSHYLWNKYGSSAKVRFISVDFEPVVAEILEKVDDGQMGVILKRMFMRAAGMIAEKFKIEALVTGEALGQVSSQTLTNLRHIDNVTDTLILRPLINWDKEDIINLAREIGTEDFAKTMPEYCGVISKKPTVKAVKEKLEAEEAKFDFSILEKVVYEARQMDIRDIAKESEQAAPEVEQVQAVEEHAVVLDIRSPDEEDDNPLEIAGVDVKHIPFYKLGTQFGDLDQSKTYLLYCDRGVMSRLQALYLQEQGFNNVKVYRP.

In terms of domain architecture, THUMP spans 61-165; sequence AEVLEILTHT…GDKLNQVLAR (105 aa). ATP-binding positions include 183-184, Lys265, Gly287, and Gln296; that span reads LI. Cys344 and Cys456 form a disulfide bridge. The 79-residue stretch at 404–482 folds into the Rhodanese domain; sequence VEEHAVVLDI…GFNNVKVYRP (79 aa). The active-site Cysteine persulfide intermediate is Cys456.

Belongs to the ThiI family.

The protein localises to the cytoplasm. It catalyses the reaction [ThiI sulfur-carrier protein]-S-sulfanyl-L-cysteine + a uridine in tRNA + 2 reduced [2Fe-2S]-[ferredoxin] + ATP + H(+) = [ThiI sulfur-carrier protein]-L-cysteine + a 4-thiouridine in tRNA + 2 oxidized [2Fe-2S]-[ferredoxin] + AMP + diphosphate. The catalysed reaction is [ThiS sulfur-carrier protein]-C-terminal Gly-Gly-AMP + S-sulfanyl-L-cysteinyl-[cysteine desulfurase] + AH2 = [ThiS sulfur-carrier protein]-C-terminal-Gly-aminoethanethioate + L-cysteinyl-[cysteine desulfurase] + A + AMP + 2 H(+). It participates in cofactor biosynthesis; thiamine diphosphate biosynthesis. Functionally, catalyzes the ATP-dependent transfer of a sulfur to tRNA to produce 4-thiouridine in position 8 of tRNAs, which functions as a near-UV photosensor. Also catalyzes the transfer of sulfur to the sulfur carrier protein ThiS, forming ThiS-thiocarboxylate. This is a step in the synthesis of thiazole, in the thiamine biosynthesis pathway. The sulfur is donated as persulfide by IscS. The polypeptide is tRNA sulfurtransferase (Vibrio parahaemolyticus serotype O3:K6 (strain RIMD 2210633)).